The primary structure comprises 462 residues: ATP-dependent protease ATPase subunit HslU (462 aa).

Residues Ile-21, 63–68, Asp-275, Glu-340, and Arg-412 contribute to the ATP site; that span reads GVGKTE.

This sequence belongs to the ClpX chaperone family. HslU subfamily. As to quaternary structure, a double ring-shaped homohexamer of HslV is capped on each side by a ring-shaped HslU homohexamer. The assembly of the HslU/HslV complex is dependent on binding of ATP.

It localises to the cytoplasm. ATPase subunit of a proteasome-like degradation complex; this subunit has chaperone activity. The binding of ATP and its subsequent hydrolysis by HslU are essential for unfolding of protein substrates subsequently hydrolyzed by HslV. HslU recognizes the N-terminal part of its protein substrates and unfolds these before they are guided to HslV for hydrolysis. In Pseudothermotoga lettingae (strain ATCC BAA-301 / DSM 14385 / NBRC 107922 / TMO) (Thermotoga lettingae), this protein is ATP-dependent protease ATPase subunit HslU.